Here is a 377-residue protein sequence, read N- to C-terminus: uncharacterized protein (377 aa).

Disordered regions lie at residues 10–79, 91–141, 182–257, 265–284, and 289–326; these read YSDG…NVNN, KKNN…DKEE, EAKK…TTTT, ENEN…EPIE, and LEFN…KEEP. Low complexity-rich tracts occupy residues 14–24, 46–79, and 93–124; these read IPQPTITPPTQ, NKNN…NVNN, and NNNN…FNDN. Composition is skewed to basic and acidic residues over residues 182-196 and 209-218; these read EAKK…KRGE and QTPDKKKKLE. The span at 221–257 shows a compositional bias: low complexity; it reads TSKNNNKSSTTKTELTNTTTNTSSTTNPTTDTTTTTT. Composition is skewed to basic and acidic residues over residues 265–274 and 292–303; these read ENENQEKENN and NKFEEKPIKEVK. Residues 311 to 320 are compositionally biased toward basic residues; that stretch reads KRNKKRNNPK.

This is an uncharacterized protein from Dictyostelium discoideum (Social amoeba).